Reading from the N-terminus, the 361-residue chain is Protein RecA (361 aa).

77-84 (GPESSGKT) contributes to the ATP binding site.

Belongs to the RecA family.

Its subcellular location is the cytoplasm. Functionally, can catalyze the hydrolysis of ATP in the presence of single-stranded DNA, the ATP-dependent uptake of single-stranded DNA by duplex DNA, and the ATP-dependent hybridization of homologous single-stranded DNAs. It interacts with LexA causing its activation and leading to its autocatalytic cleavage. This Sinorhizobium medicae (strain WSM419) (Ensifer medicae) protein is Protein RecA.